The primary structure comprises 161 residues: Phosphopantetheine adenylyltransferase (161 aa).

Residue serine 9 participates in substrate binding. ATP is bound by residues 9 to 10 (SF) and histidine 17. The substrate site is built by lysine 41, threonine 73, and arginine 87. ATP contacts are provided by residues 88–90 (GLR), glutamate 98, and 123–129 (FAHISST).

This sequence belongs to the bacterial CoaD family. As to quaternary structure, homohexamer. Mg(2+) is required as a cofactor.

Its subcellular location is the cytoplasm. The enzyme catalyses (R)-4'-phosphopantetheine + ATP + H(+) = 3'-dephospho-CoA + diphosphate. It functions in the pathway cofactor biosynthesis; coenzyme A biosynthesis; CoA from (R)-pantothenate: step 4/5. Its function is as follows. Reversibly transfers an adenylyl group from ATP to 4'-phosphopantetheine, yielding dephospho-CoA (dPCoA) and pyrophosphate. The sequence is that of Phosphopantetheine adenylyltransferase from Chloroflexus aurantiacus (strain ATCC 29366 / DSM 635 / J-10-fl).